Reading from the N-terminus, the 308-residue chain is uncharacterized protein (308 aa).

Helical transmembrane passes span 6-26 (VVLI…FGIL), 31-51 (AKIL…FLTI), 63-83 (FLKL…LAYL), 100-120 (ILVS…LGMF), 128-148 (AIFC…YVGI), 162-182 (MAKF…FFGF), 195-215 (LNYL…LSLS), 221-241 (FGVF…PATA), 257-277 (VLLV…GTLY), and 287-307 (SIFI…WILL).

The protein belongs to the auxin efflux carrier (TC 2.A.69) family.

Its subcellular location is the cell membrane. This is an uncharacterized protein from Methanocaldococcus jannaschii (strain ATCC 43067 / DSM 2661 / JAL-1 / JCM 10045 / NBRC 100440) (Methanococcus jannaschii).